Reading from the N-terminus, the 123-residue chain is Large ribosomal subunit protein uL24 (123 aa).

It belongs to the universal ribosomal protein uL24 family. Part of the 50S ribosomal subunit.

One of two assembly initiator proteins, it binds directly to the 5'-end of the 23S rRNA, where it nucleates assembly of the 50S subunit. Its function is as follows. One of the proteins that surrounds the polypeptide exit tunnel on the outside of the subunit. This is Large ribosomal subunit protein uL24 from Kineococcus radiotolerans (strain ATCC BAA-149 / DSM 14245 / SRS30216).